A 475-amino-acid polypeptide reads, in one-letter code: ATP synthase subunit beta, chloroplastic (475 aa).

An ATP-binding site is contributed by 156 to 163 (GGAGVGKT).

Belongs to the ATPase alpha/beta chains family. F-type ATPases have 2 components, CF(1) - the catalytic core - and CF(0) - the membrane proton channel. CF(1) has five subunits: alpha(3), beta(3), gamma(1), delta(1), epsilon(1). CF(0) has four main subunits: a(1), b(1), b'(1) and c(9-12).

The protein resides in the plastid. Its subcellular location is the chloroplast thylakoid membrane. It carries out the reaction ATP + H2O + 4 H(+)(in) = ADP + phosphate + 5 H(+)(out). Its function is as follows. Produces ATP from ADP in the presence of a proton gradient across the membrane. The catalytic sites are hosted primarily by the beta subunits. The sequence is that of ATP synthase subunit beta, chloroplastic from Trieres chinensis (Marine centric diatom).